Reading from the N-terminus, the 521-residue chain is Beta-glucosidase 6 (521 aa).

The first 38 residues, 1-38 (MGRIKSSSGRCSTARLEAVAVLVVVFGVASSSLRGCIA), serve as a signal peptide directing secretion. A beta-D-glucoside-binding positions include Gln64, His165, and 210-211 (NE). Glu211 functions as the Proton donor in the catalytic mechanism. An intrachain disulfide couples Cys230 to Cys238. N-linked (GlcNAc...) asparagine glycosylation is present at Asn291. Position 354 (Tyr354) interacts with a beta-D-glucoside. N-linked (GlcNAc...) asparagine glycans are attached at residues Asn362 and Asn372. A beta-D-glucoside-binding positions include Glu427, Trp477, 484–485 (EW), and Phe493. The active-site Nucleophile is the Glu427.

Belongs to the glycosyl hydrolase 1 family. In terms of assembly, homodimer.

It is found in the secreted. It catalyses the reaction Hydrolysis of terminal, non-reducing beta-D-glucosyl residues with release of beta-D-glucose.. Functionally, hydrolyzes glycosides, oligosaccharides and hydrophobic glycosides. Possesses gibberellin ester beta-D-glucosidase activity. Can hydrolyze gibberellin A4 beta-D-glucosyl ester in vitro. In Oryza sativa subsp. japonica (Rice), this protein is Beta-glucosidase 6.